The following is a 316-amino-acid chain: Nod factor export ATP-binding protein I (316 aa).

The region spanning 18 to 248 (IDFSDVSKTY…LIGCEVIEIY (231 aa)) is the ABC transporter domain. 50–57 (GPNGAGKS) is a binding site for ATP.

This sequence belongs to the ABC transporter superfamily. Lipooligosaccharide exporter (TC 3.A.1.102) family. The complex is composed of two ATP-binding proteins (NodI) and two transmembrane proteins (NodJ).

It is found in the cell inner membrane. Part of the ABC transporter complex NodIJ involved in the export of the nodulation factors (Nod factors), the bacterial signal molecules that induce symbiosis and subsequent nodulation induction. Nod factors are LCO (lipo-chitin oligosaccharide), a modified beta-1,4-linked N-acetylglucosamine oligosaccharide. This subunit is responsible for energy coupling to the transport system. This is Nod factor export ATP-binding protein I from Rhizobium etli (strain ATCC 51251 / DSM 11541 / JCM 21823 / NBRC 15573 / CFN 42).